The chain runs to 354 residues: Elongation factor Ts (354 aa).

The involved in Mg(2+) ion dislocation from EF-Tu stretch occupies residues 81–84 (TDFV).

The protein belongs to the EF-Ts family.

It localises to the cytoplasm. Functionally, associates with the EF-Tu.GDP complex and induces the exchange of GDP to GTP. It remains bound to the aminoacyl-tRNA.EF-Tu.GTP complex up to the GTP hydrolysis stage on the ribosome. This Campylobacter curvus (strain 525.92) protein is Elongation factor Ts.